A 174-amino-acid chain; its full sequence is Squamosa promoter-binding-like protein 4 (174 aa).

A disordered region spans residues 1 to 42; the sequence is MEGKRSQGQGYMKKKSYLVEEDMETDTDEEEEVGRDRVRGSR. The segment covering 19–33 has biased composition (acidic residues); the sequence is VEEDMETDTDEEEEV. Residues 51 to 128 form an SBP-type zinc finger; it reads LRLCQVDRCT…AGHNERRRKS (78 aa). Zn(2+)-binding residues include C54, C59, C76, H79, C95, C98, H102, and C114. Residues 111–127 carry the Bipartite nuclear localization signal motif; that stretch reads KRSCRRRLAGHNERRRK. Basic residues predominate over residues 118–127; it reads LAGHNERRRK. Disordered stretches follow at residues 118–148 and 155–174; these read LAGH…GQVV and SRVE…PQIR. Over residues 163 to 174 the composition is skewed to polar residues; the sequence is MPNSSFKRPQIR.

Zn(2+) is required as a cofactor. Expressed in the rib meristem and inter-primordial tissue of the inflorescence apex.

Its subcellular location is the nucleus. It localises to the cytoplasm. Trans-acting factor that binds specifically to the consensus nucleotide sequence 5'-TNCGTACAA-3' of AP1 promoter. Promotes both vegetative phase change and flowering. The sequence is that of Squamosa promoter-binding-like protein 4 (SPL4) from Arabidopsis thaliana (Mouse-ear cress).